The sequence spans 116 residues: Ribonuclease P protein component (116 aa).

This sequence belongs to the RnpA family. As to quaternary structure, consists of a catalytic RNA component (M1 or rnpB) and a protein subunit.

The enzyme catalyses Endonucleolytic cleavage of RNA, removing 5'-extranucleotides from tRNA precursor.. Its function is as follows. RNaseP catalyzes the removal of the 5'-leader sequence from pre-tRNA to produce the mature 5'-terminus. It can also cleave other RNA substrates such as 4.5S RNA. The protein component plays an auxiliary but essential role in vivo by binding to the 5'-leader sequence and broadening the substrate specificity of the ribozyme. The sequence is that of Ribonuclease P protein component from Lachnoclostridium phytofermentans (strain ATCC 700394 / DSM 18823 / ISDg) (Clostridium phytofermentans).